A 367-amino-acid chain; its full sequence is Pectate trisaccharide-lyase (367 aa).

An N-terminal signal peptide occupies residues 1–27 (MLMRFSRVVSLVLLLVFTAVLTGAVKA). Residues Asp-144, Asp-166, and Asp-170 each contribute to the Ca(2+) site. The PbH1 1 repeat unit spans residues 151 to 173 (SHHIWIDHCTFVNGNDGAVDIKK). The active site involves Arg-224. One copy of the PbH1 2 repeat lies at 263 to 289 (GAKVHVEGNYFMGYGAVMAEAGIAFLP).

It belongs to the polysaccharide lyase 1 family. In terms of assembly, homotetramer. Ca(2+) is required as a cofactor.

It is found in the secreted. The enzyme catalyses eliminative cleavage of unsaturated trigalacturonate as the major product from the reducing end of polygalacturonic acid/pectate.. Completely inactivated by EGTA. Functionally, cleaves unsaturated trigalacturonate from pectin. Activity is highest towards polygalacturonic acid, activity on methylated pectins decreases with an increasing degree of methylation. The polypeptide is Pectate trisaccharide-lyase (Thermotoga maritima (strain ATCC 43589 / DSM 3109 / JCM 10099 / NBRC 100826 / MSB8)).